The primary structure comprises 278 residues: Tryptophan synthase alpha chain (278 aa).

Catalysis depends on proton acceptor residues E61 and D72.

The protein belongs to the TrpA family. As to quaternary structure, tetramer of two alpha and two beta chains.

The enzyme catalyses (1S,2R)-1-C-(indol-3-yl)glycerol 3-phosphate + L-serine = D-glyceraldehyde 3-phosphate + L-tryptophan + H2O. The protein operates within amino-acid biosynthesis; L-tryptophan biosynthesis; L-tryptophan from chorismate: step 5/5. The alpha subunit is responsible for the aldol cleavage of indoleglycerol phosphate to indole and glyceraldehyde 3-phosphate. The protein is Tryptophan synthase alpha chain of Shewanella oneidensis (strain ATCC 700550 / JCM 31522 / CIP 106686 / LMG 19005 / NCIMB 14063 / MR-1).